The chain runs to 509 residues: Probable cation transporter HKT2;3 (509 aa).

Topologically, residues Met-1–Pro-32 are cytoplasmic. The next 2 helical transmembrane spans lie at Leu-33–Val-53 and Ile-96–Leu-116. At Glu-117 to Tyr-164 the chain is on the cytoplasmic side. Transmembrane regions (helical) follow at residues Leu-165–Phe-185 and Gly-237–Leu-257. At Arg-258–Thr-296 the chain is on the cytoplasmic side. 2 consecutive transmembrane segments (helical) span residues Ile-297–Leu-317 and Cys-353–Leu-373. At Thr-374–Phe-400 the chain is on the cytoplasmic side. 2 helical membrane passes run Leu-401–Ile-421 and Ala-474–Leu-494. Topologically, residues Cys-495 to Arg-509 are cytoplasmic.

Belongs to the TrkH potassium transport family. HKT (TC 2.A.38.3) subfamily.

It localises to the membrane. Its function is as follows. Probable cation transporter. May be involved in regulation of potassium-sodium homeostasis. This chain is Probable cation transporter HKT2;3, found in Oryza sativa subsp. japonica (Rice).